The primary structure comprises 59 residues: UPF0434 protein Ping_0902 (59 aa).

It belongs to the UPF0434 family.

This Psychromonas ingrahamii (strain DSM 17664 / CCUG 51855 / 37) protein is UPF0434 protein Ping_0902.